A 260-amino-acid chain; its full sequence is Cytosolic Fe-S cluster assembly factor Nubp2 homolog (260 aa).

14–21 (GKGGVGKS) is a binding site for ATP. Residues Cys188 and Cys191 each contribute to the [4Fe-4S] cluster site.

This sequence belongs to the Mrp/NBP35 ATP-binding proteins family. NUBP2/CFD1 subfamily. In terms of assembly, heterotetramer of 2 Nubp1 and 2 Nubp2 chains. [4Fe-4S] cluster is required as a cofactor.

It localises to the cytoplasm. In terms of biological role, component of the cytosolic iron-sulfur (Fe/S) protein assembly (CIA) machinery. Required for maturation of extramitochondrial Fe-S proteins. The Nubp1-Nubp2 heterotetramer forms a Fe-S scaffold complex, mediating the de novo assembly of an Fe-S cluster and its transfer to target apoproteins. The polypeptide is Cytosolic Fe-S cluster assembly factor Nubp2 homolog (Drosophila melanogaster (Fruit fly)).